We begin with the raw amino-acid sequence, 314 residues long: Olfactory receptor 1E16 (314 aa).

Residues 1-29 (MTERNKTVISQFLLLGLPIPPEHQQLFYA) lie on the Extracellular side of the membrane. An N-linked (GlcNAc...) asparagine glycan is attached at Asn5. A helical transmembrane segment spans residues 30–50 (LFLVMYLTTVLGNLIIIILII). The Cytoplasmic segment spans residues 51–57 (LDSHLHT). Residues 58–78 (PMYLFLSNLSFSDLCFSSVTM) form a helical membrane-spanning segment. Topologically, residues 79–97 (PKLLQNMQSQVPSIPYAGC) are extracellular. Cys97 and Cys179 are oxidised to a cystine. A helical transmembrane segment spans residues 98–118 (LAQIYFFLFFGDLGNFLLVAM). Residues 119–143 (AYDRYVAICYPLHYTTIMSPRLCVS) are Cytoplasmic-facing. Residues 144-164 (LVVLSWVLTTFHAMLHTLLMA) form a helical membrane-spanning segment. Topologically, residues 165-196 (RLSFCEDNVIPHYFCDMSALLKLACSDTRVNE) are extracellular. The helical transmembrane segment at 197 to 217 (VVIFIVASIFLVLPFALITMS) threads the bilayer. Topologically, residues 218-239 (YVRIVSSILKVPSSQGIYKAFS) are cytoplasmic. A helical membrane pass occupies residues 240 to 260 (TCGSHLSVVSLFYGTVIGLYL). At 261–271 (SPSSNNSTVKD) the chain is on the extracellular side. N-linked (GlcNAc...) asparagine glycosylation is found at Asn265 and Asn266. Residues 272 to 292 (TVMSLMYTVVTPMLNPFIYSL) traverse the membrane as a helical segment. Over 293 to 314 (RNRDIKGALERVFCKRKIQLNL) the chain is Cytoplasmic.

It belongs to the G-protein coupled receptor 1 family. Olfactory epithelium.

The protein resides in the cell membrane. Functionally, odorant receptor. Activated by a lily-derived aldehyde as well as other odorants. May signal through an inositol 1,4,5-trisphosphate (IP3) second messenger system. The protein is Olfactory receptor 1E16 of Mus musculus (Mouse).